Reading from the N-terminus, the 154-residue chain is Ascorbate-specific PTS system EIIA component (154 aa).

Residues Ser6–Thr150 enclose the PTS EIIA type-2 domain. Residue His68 is the Tele-phosphohistidine intermediate of the active site. A Phosphohistidine modification is found at His68.

It is found in the cytoplasm. Functionally, the phosphoenolpyruvate-dependent sugar phosphotransferase system (sugar PTS), a major carbohydrate active transport system, catalyzes the phosphorylation of incoming sugar substrates concomitantly with their translocation across the cell membrane. The enzyme II UlaABC PTS system is involved in ascorbate transport. The protein is Ascorbate-specific PTS system EIIA component (ulaC) of Salmonella paratyphi A (strain ATCC 9150 / SARB42).